The chain runs to 166 residues: Regulator of ribonuclease activity A (166 aa).

It belongs to the RraA family. In terms of assembly, homotrimer. Binds to both RNA-binding sites in the C-terminal region of Rne and to RhlB.

It is found in the cytoplasm. Its function is as follows. Globally modulates RNA abundance by binding to RNase E (Rne) and regulating its endonucleolytic activity. Can modulate Rne action in a substrate-dependent manner by altering the composition of the degradosome. Modulates RNA-binding and helicase activities of the degradosome. The protein is Regulator of ribonuclease activity A of Histophilus somni (strain 2336) (Haemophilus somnus).